The following is a 433-amino-acid chain: Serine hydroxymethyltransferase (433 aa).

Residues Leu-121 and 125 to 127 (GHI) contribute to the (6S)-5,6,7,8-tetrahydrofolate site. Lys-231 is modified (N6-(pyridoxal phosphate)lysine).

It belongs to the SHMT family. Homodimer. Pyridoxal 5'-phosphate serves as cofactor.

It is found in the cytoplasm. The protein operates within amino-acid biosynthesis; glycine biosynthesis; glycine from L-serine: step 1/1. Its function is as follows. Catalyzes the reversible interconversion of serine and glycine with a modified folate serving as the one-carbon carrier. Also exhibits a pteridine-independent aldolase activity toward beta-hydroxyamino acids, producing glycine and aldehydes, via a retro-aldol mechanism. This chain is Serine hydroxymethyltransferase, found in Picrophilus torridus (strain ATCC 700027 / DSM 9790 / JCM 10055 / NBRC 100828 / KAW 2/3).